We begin with the raw amino-acid sequence, 193 residues long: Rho-related protein racF1 (193 aa).

Residue 10–17 (GDGAVGKT) participates in GTP binding. Residues 32 to 40 (YIPTVFDNY) carry the Effector region motif. GTP-binding positions include 57 to 61 (DTAGQ) and 115 to 118 (TKQD). Residue Cys-190 is modified to Cysteine methyl ester. The S-geranylgeranyl cysteine moiety is linked to residue Cys-190. Residues 191-193 (TIM) constitute a propeptide, removed in mature form.

Belongs to the small GTPase superfamily. Rho family. Interacts with pakB.

The protein localises to the membrane. Might act in concert and/or share functions with other members of the RHO family in the regulation of a subset of cytoskeletal rearrangements that are required for these processes. This is Rho-related protein racF1 (racF1) from Dictyostelium discoideum (Social amoeba).